The primary structure comprises 437 residues: Palmitoyltransferase PFA4 (437 aa).

At 1 to 12 the chain is on the cytoplasmic side; that stretch reads MAGLNDVPFIKG. A helical membrane pass occupies residues 13–33; it reads LAVPSVCALIIFLGYASQFLF. Residues 34-48 lie on the Lumenal side of the membrane; sequence NYSTTLEPGPPTRRE. Residues 49–69 form a helical membrane-spanning segment; the sequence is TIIFNGLLLVLWITYYRTVAT. Residues 70–130 are Cytoplasmic-facing; sequence DPGRYIFKDR…RNCVSMTTFP (61 aa). In terms of domain architecture, DHHC spans 87-137; sequence RWCNKCAAPKPPRAHHCRHCARCVPRMDHHCPWTRNCVSMTTFPHFLRFLI. The active-site S-palmitoyl cysteine intermediate is the Cys117. A helical membrane pass occupies residues 131–151; the sequence is HFLRFLIYTNMSLWMLGYFLW. Residues 152–173 are Lumenal-facing; sequence QRFSKIWEHRRLPAYLGPSFYG. The chain crosses the membrane as a helical span at residues 174 to 194; sequence LICLSLISIVNFVTTVALGIM. The Cytoplasmic segment spans residues 195-437; sequence LINTVKSWVF…KILKKDGLDD (243 aa). A disordered region spans residues 377-419; sequence LDQGLGWVNSDGDRLRDYGVDEEASEPEGVNDDDDDDDDDDVP. The segment covering 396 to 419 has biased composition (acidic residues); the sequence is VDEEASEPEGVNDDDDDDDDDDVP.

It belongs to the DHHC palmitoyltransferase family. PFA4 subfamily.

The protein resides in the endoplasmic reticulum membrane. The enzyme catalyses L-cysteinyl-[protein] + hexadecanoyl-CoA = S-hexadecanoyl-L-cysteinyl-[protein] + CoA. Its function is as follows. Mediates the reversible addition of palmitate to target proteins, thereby regulating their membrane association and biological function. The sequence is that of Palmitoyltransferase PFA4 from Gibberella zeae (strain ATCC MYA-4620 / CBS 123657 / FGSC 9075 / NRRL 31084 / PH-1) (Wheat head blight fungus).